The following is a 409-amino-acid chain: Endoglucanase B (409 aa).

Substrate-binding positions include His-61, 65–66 (WY), Tyr-92, and His-127. Residue Glu-165 is the Proton donor of the active site. Residue Tyr-228 coordinates substrate. Catalysis depends on Glu-254, which acts as the Nucleophile. Substrate contacts are provided by residues 260–261 (AT), Trp-288, and 293–295 (KDE). The disordered stretch occupies residues 326-372 (IRESATTPPSDPTPPSDPDPGEPEPDPGEPDPTPPSDPGDYPAWDPN). Residues 334 to 343 (PSDPTPPSDP) are compositionally biased toward pro residues. Over residues 344-354 (DPGEPEPDPGE) the composition is skewed to acidic residues.

This sequence belongs to the glycosyl hydrolase 5 (cellulase A) family.

The enzyme catalyses Endohydrolysis of (1-&gt;4)-beta-D-glucosidic linkages in cellulose, lichenin and cereal beta-D-glucans.. This is Endoglucanase B (celB) from Evansella cellulosilytica (strain ATCC 21833 / DSM 2522 / FERM P-1141 / JCM 9156 / N-4) (Bacillus cellulosilyticus).